Reading from the N-terminus, the 444-residue chain is Tubulin beta-8 chain (444 aa).

The MREI motif signature appears at 1-4 (MREI). Positions 11, 69, 138, 142, 143, and 144 each coordinate GTP. Glu69 contributes to the Mg(2+) binding site. At Ser172 the chain carries Phosphoserine; by CDK1. Residues Asn204 and Asn226 each coordinate GTP. The segment at 423-444 (QQYQDATAEEEEDEEYAEEEVA) is disordered. The span at 429–444 (TAEEEEDEEYAEEEVA) shows a compositional bias: acidic residues. Glu436 is subject to 5-glutamyl polyglutamate.

It belongs to the tubulin family. Dimer of alpha and beta chains. A typical microtubule is a hollow water-filled tube with an outer diameter of 25 nm and an inner diameter of 15 nM. Alpha-beta heterodimers associate head-to-tail to form protofilaments running lengthwise along the microtubule wall with the beta-tubulin subunit facing the microtubule plus end conferring a structural polarity. Microtubules usually have 13 protofilaments but different protofilament numbers can be found in some organisms and specialized cells. It depends on Mg(2+) as a cofactor. Post-translationally, some glutamate residues at the C-terminus are polyglycylated, resulting in polyglycine chains on the gamma-carboxyl group. Glycylation is mainly limited to tubulin incorporated into axonemes (cilia and flagella) whereas glutamylation is prevalent in neuronal cells, centrioles, axonemes, and the mitotic spindle. Both modifications can coexist on the same protein on adjacent residues, and lowering polyglycylation levels increases polyglutamylation, and reciprocally. Cilia and flagella glycylation is required for their stability and maintenance. Flagella glycylation controls sperm motility. Some glutamate residues at the C-terminus are polyglutamylated, resulting in polyglutamate chains on the gamma-carboxyl group. Polyglutamylation plays a key role in microtubule severing by spastin (SPAST). SPAST preferentially recognizes and acts on microtubules decorated with short polyglutamate tails: severing activity by SPAST increases as the number of glutamates per tubulin rises from one to eight, but decreases beyond this glutamylation threshold. Glutamylation is also involved in cilia motility. In terms of processing, phosphorylated on Ser-172 by CDK1 during the cell cycle, from metaphase to telophase, but not in interphase. This phosphorylation inhibits tubulin incorporation into microtubules.

The protein resides in the cytoplasm. It localises to the cytoskeleton. It is found in the spindle. Functionally, tubulin is the major constituent of microtubules, a cylinder consisting of laterally associated linear protofilaments composed of alpha- and beta-tubulin heterodimers. Microtubules grow by the addition of GTP-tubulin dimers to the microtubule end, where a stabilizing cap forms. Below the cap, tubulin dimers are in GDP-bound state, owing to GTPase activity of alpha-tubulin. Has a key role in meiotic spindle assembly and oocyte maturation. In Pan troglodytes (Chimpanzee), this protein is Tubulin beta-8 chain (TUBB8).